Reading from the N-terminus, the 129-residue chain is Copper chaperone GriE (129 aa).

Residues 1–37 constitute a signal peptide (tat-type signal); the sequence is MPMNRREMVMATTGAALAAAAAVPLLSGGEGEGAAEA. The interval 32-51 is disordered; it reads EGAAEAAAAPAKATGRGREH. The span at 34–45 shows a compositional bias: low complexity; that stretch reads AAEAAAAPAKAT.

It belongs to the melC1 family. Predicted to be exported by the Tat system. The position of the signal peptide cleavage has not been experimentally proven.

In terms of biological role, involved in the transfer of Cu(2+) ions to the apo form of o-aminophenol oxidase GriF in the grixazone biosynthetic pathway. The polypeptide is Copper chaperone GriE (griE) (Streptomyces griseus subsp. griseus (strain JCM 4626 / CBS 651.72 / NBRC 13350 / KCC S-0626 / ISP 5235)).